The following is a 40-amino-acid chain: Peroxisomal LYS1 stabilizing protein 1 (40 aa).

The segment covering 1–10 has biased composition (polar residues); sequence MTAKTKQSWN. Residues 1–20 are disordered; sequence MTAKTKQSWNKGIWENGKQG.

The protein resides in the cytoplasm. The protein localises to the cytosol. Its subcellular location is the peroxisome matrix. Modulates the lysine biosynthesis pathway, possibly by stabilizing the lysine biosynthesis LYS1 protein in lysine-deplete conditions. The sequence is that of Peroxisomal LYS1 stabilizing protein 1 from Saccharomyces cerevisiae (strain ATCC 204508 / S288c) (Baker's yeast).